The primary structure comprises 348 residues: Uroporphyrinogen decarboxylase (348 aa).

Substrate contacts are provided by residues 27–31 (RQAGR), F46, D76, Y152, S207, and H320.

This sequence belongs to the uroporphyrinogen decarboxylase family. In terms of assembly, homodimer.

It is found in the cytoplasm. The enzyme catalyses uroporphyrinogen III + 4 H(+) = coproporphyrinogen III + 4 CO2. The protein operates within porphyrin-containing compound metabolism; protoporphyrin-IX biosynthesis; coproporphyrinogen-III from 5-aminolevulinate: step 4/4. Catalyzes the decarboxylation of four acetate groups of uroporphyrinogen-III to yield coproporphyrinogen-III. This is Uroporphyrinogen decarboxylase from Bacillus cereus (strain AH820).